The following is an 803-amino-acid chain: Zinc finger and BTB domain-containing protein 17 (803 aa).

The BTB domain maps to 1 to 104 (MDFPQHSQHV…VATFLQMQDI (104 aa)). Positions 116–295 (EPATSPGGNA…GLRSGTYGDR (180 aa)) are disordered. Ser-120 carries the phosphoserine modification. Positions 132-142 (GGDKRAKEEKV) are enriched in basic and acidic residues. 2 stretches are compositionally biased toward low complexity: residues 171–180 (GQAQSAASGA) and 206–217 (AAAEAEAALSES). 2 stretches are compositionally biased toward acidic residues: residues 233-244 (EQKEQEEQEEEG) and 261-272 (EAPEENENEESA). The tract at residues 269-308 (EESAGTDSGQELGSEARGLRSGTYGDRTESKAYGSVIHKC) is interaction with MYC. C2H2-type zinc fingers lie at residues 306–328 (HKCE…IRIH), 334–356 (FSCR…EKTH), 362–384 (YGCE…KKRH), 390–412 (YRCE…QLVH), 418–440 (YQCD…LETH), 446–468 (HKCP…LKIH), 474–496 (LKCR…LRIH), 502–524 (YVCI…VRIH), 530–552 (CQCV…VRQH), 558–580 (YVCE…IRHH), 586–608 (HKCS…IIIH), 614–637 (YLCD…KTVH), and 717–739 (YACD…VRIH). Residue Lys-397 forms a Glycyl lysine isopeptide (Lys-Gly) (interchain with G-Cter in ubiquitin) linkage. Residue Lys-481 forms a Glycyl lysine isopeptide (Lys-Gly) (interchain with G-Cter in ubiquitin) linkage. Residues 637 to 718 (HQGKAGIKIL…EDPNTHILYA (82 aa)) are interaction with MYC. Positions 637–803 (HQGKAGIKIL…TAPECPPPAE (167 aa)) are interaction with HCFC1. The disordered stretch occupies residues 779–803 (RDGAEGQPALAETSPTAPECPPPAE).

This sequence belongs to the krueppel C2H2-type zinc-finger protein family. As to quaternary structure, homooligomerizes (via the BTB/POZ domain), multimerization is required for DNA binding. Interacts (via the C-terminal zinc fingers) with GIF1; the interaction results in the recruitment of MYB to the CDKN1A/p21 and CDKN1B promoters and repression of transcription. Interacts with TRAF2, interfering with the binding of UBC13 to TRAF2, and inhibiting TRAF2 E3 ligase activity. Interacts with MYC (via the C-terminal helix-loop-helix motif); the interaction inhibits ZBTB17 transactivation and growth arrest activities and renders it insoluble in the nucleus. Also interacts with HCFC1, MAGEA4 and TMPRSS11A. Interacts with BCL6; the interaction inhibits ZBTB17 transactivation activity on target genes involved in cell cycle arrest. Interacts with ZBTB49 isoform 3/ZNF509S1; this interaction blocks ZBTB17-mediated repression of RB1. Post-translationally, undergoes 'Lys-48'-linked polyubiquitination at Lys-397 and Lys-481 and subsequent proteasomal degradation in a TRAF2-dependent manner. Expressed in germinal center B-cells.

The protein localises to the nucleus. Transcription factor that can function as an activator or repressor depending on its binding partners, and by targeting negative regulators of cell cycle progression. Plays a critical role in early lymphocyte development, where it is essential to prevent apoptosis in lymphoid precursors, allowing them to survive in response to IL7 and undergo proper lineage commitment. Has been shown to bind to the promoters of adenovirus major late protein and cyclin D1 and activate transcription. Required for early embryonic development during gastrulation. Represses RB1 transcription; this repression can be blocked by interaction with ZBTB49 isoform 3/ZNF509S1. The sequence is that of Zinc finger and BTB domain-containing protein 17 (ZBTB17) from Homo sapiens (Human).